Reading from the N-terminus, the 504-residue chain is Peroxisomal catalase (504 aa).

Catalysis depends on residues histidine 63 and asparagine 136. Heme is bound at residue tyrosine 345. The short motif at 502–504 (NKF) is the Microbody targeting signal element.

It belongs to the catalase family. Requires heme as cofactor.

The protein localises to the peroxisome matrix. It carries out the reaction 2 H2O2 = O2 + 2 H2O. Functionally, catalyzes the degradation of hydrogen peroxide (H(2)O(2)) generated by peroxisomal oxidases to water and oxygen, thereby protecting cells from the toxic effects of hydrogen peroxide. This Candida boidinii (Yeast) protein is Peroxisomal catalase (CTA1).